The primary structure comprises 138 residues: ATP synthase epsilon chain (138 aa).

This sequence belongs to the ATPase epsilon chain family. F-type ATPases have 2 components, CF(1) - the catalytic core - and CF(0) - the membrane proton channel. CF(1) has five subunits: alpha(3), beta(3), gamma(1), delta(1), epsilon(1). CF(0) has three main subunits: a, b and c.

The protein localises to the cell inner membrane. Produces ATP from ADP in the presence of a proton gradient across the membrane. The chain is ATP synthase epsilon chain from Geobacter sp. (strain M21).